The primary structure comprises 165 residues: Phosphopantetheine adenylyltransferase (165 aa).

Residue Thr9 coordinates substrate. Residues 9-10 (TF) and His17 contribute to the ATP site. 3 residues coordinate substrate: Lys41, Leu73, and Arg87. ATP is bound by residues 88–90 (GLR), Glu98, and 123–129 (YQFISGT).

This sequence belongs to the bacterial CoaD family. In terms of assembly, homohexamer. It depends on Mg(2+) as a cofactor.

It is found in the cytoplasm. The enzyme catalyses (R)-4'-phosphopantetheine + ATP + H(+) = 3'-dephospho-CoA + diphosphate. Its pathway is cofactor biosynthesis; coenzyme A biosynthesis; CoA from (R)-pantothenate: step 4/5. Its function is as follows. Reversibly transfers an adenylyl group from ATP to 4'-phosphopantetheine, yielding dephospho-CoA (dPCoA) and pyrophosphate. This is Phosphopantetheine adenylyltransferase from Polynucleobacter necessarius subsp. necessarius (strain STIR1).